The sequence spans 1221 residues: Reverse gyrase subunit B (1221 aa).

An RG N-terminal-type zinc finger spans residues 56-97 (NEPVAIFGSSCVLCGGDCSSVRLTSRIGICERCLPVDTETLR). Positions 66, 69, 85, and 88 each coordinate Zn(2+). ATP-binding positions include Q161 and 178 to 185 (APTGTGKT). In terms of domain architecture, Helicase ATP-binding spans 165–400 (TRRLVKGCSF…AVVRELFDFE (236 aa)). A DEAD box motif is present at residues 284 to 287 (DDVD). The 177-residue stretch at 424-600 (AVERIVRKAG…PLSLNTLMKL (177 aa)) folds into the Helicase C-terminal domain. The Toprim domain occupies 779 to 935 (SALMIVESPN…QVYRTEFHEV (157 aa)). A Mg(2+)-binding site is contributed by E785. The RG C-terminal-type zinc finger occupies 856 to 882 (LGRCSECGEQVVGSEECPNCGGEVELK). 4 residues coordinate Zn(2+): C859, C862, C872, and C875. D904 contacts Mg(2+). One can recognise a Topo IA-type catalytic domain in the interval 953-1221 (DAGRVSAQIL…MLHLAGVSGR (269 aa)).

This sequence in the C-terminal section; belongs to the type IA topoisomerase family. In the N-terminal section; belongs to the DEAD box helicase family. DDVD subfamily. As to quaternary structure, heterodimer of an RgyrA and RgyrB subunit. The topoisomerase domain is shared between the two subunits. The cofactor is Zn(2+). Requires Mg(2+) as cofactor. In terms of processing, the N-terminus is partially blocked.

The protein resides in the cytoplasm. The catalysed reaction is ATP + H2O = ADP + phosphate + H(+). Its function is as follows. Modifies the topological state of DNA by introducing positive supercoils in an ATP-dependent process; dATP also allows positive supercoiling. Increases the linking number in steps of +1. Only this subunit binds ATP, it does so in a DNA- and RgyA-independent manner. Hydrolyzes ATP only in the presence of DNA. The RgyA subunit transiently cleaves a single DNA strand and remains covalently bound to the 5' DNA end probably through a tyrosine residue. It changes linking number in steps of one, and nicks DNA preferentially at 5'-CNNN | 3'-sites with a strong preference for 4 pyrimidine residues. There are about 1000 heterodimers per cell. May be involved in rewinding the DNA strands in the regions of the chromosome that have opened up to allow transcription or replication. In terms of biological role, this subunit expressed in E.coli only has DNA-dependent ATPase activity at 80 degrees Celsius. Reverse gyrase activity is reconstituted after incubation at 80 degrees Celsius for 5 minutes, positive supercoiling requires ATP and Mg(2+). In the presence of ATP it binds and nicks substrate but does not make closed product. The polypeptide is Reverse gyrase subunit B (Methanopyrus kandleri (strain AV19 / DSM 6324 / JCM 9639 / NBRC 100938)).